The chain runs to 176 residues: Large ribosomal subunit protein uL16 (176 aa).

Belongs to the universal ribosomal protein uL16 family.

This is Large ribosomal subunit protein uL16 from Halobacterium salinarum (strain ATCC 29341 / DSM 671 / R1).